The chain runs to 247 residues: uncharacterized protein (247 aa).

Position 4-28 (4-28 (ALVTGGSRGIGRATALLLAQEGYTV)) interacts with NADP(+). Ser-142 lines the substrate pocket. Tyr-156 (proton acceptor) is an active-site residue.

This sequence belongs to the short-chain dehydrogenases/reductases (SDR) family.

This is an uncharacterized protein from Escherichia coli (strain K12).